We begin with the raw amino-acid sequence, 193 residues long: ER membrane protein complex subunit 4 (193 aa).

Transmembrane regions (helical) follow at residues 91–111 (ILAY…TLML) and 137–157 (LWPA…IGVY).

Belongs to the EMC4 family.

Its subcellular location is the endoplasmic reticulum membrane. This is ER membrane protein complex subunit 4 from Schizosaccharomyces pombe (strain 972 / ATCC 24843) (Fission yeast).